A 178-amino-acid polypeptide reads, in one-letter code: Large ribosomal subunit protein uL6 (178 aa).

Belongs to the universal ribosomal protein uL6 family. Part of the 50S ribosomal subunit.

Functionally, this protein binds to the 23S rRNA, and is important in its secondary structure. It is located near the subunit interface in the base of the L7/L12 stalk, and near the tRNA binding site of the peptidyltransferase center. The chain is Large ribosomal subunit protein uL6 from Thermobifida fusca (strain YX).